We begin with the raw amino-acid sequence, 396 residues long: MSRPLQITILGATGSIGLSTLDVVARHPDRYDVFALTGFSRLAELRALCLKHRPRYAVVSDQAQARILQDQLHADGVSTRVLDGEGGLSEVAAHPEVDVVMAAIVGAAGLKPTLAAVQSGKRVLLANKEALVMSGALFMQALRDSGAVLLPIDSEHNAIFQCLPTDYSQGLGTVGVRRILLTASGGPFREMAPDLLSDVTPEQACAHPNWSMGRKISVDSASMMNKGLELIEACWLFDARPHQVEVVIHPQSVIHSMVDYVDGSVLAQLGNPDMRTPIAHALAWPERIESGVSALDLLRVGRLDFQAPDDRRFPCLRLARTAAEVGGTAPAMLNAANEVAVDAFLNRRIRFTEIASIIDDVLNHEASVPTVCLEDVLAADRRARDVAGQWLYRNGR.

Residues Thr-13, Gly-14, Ser-15, Ile-16, and Asn-127 each contribute to the NADPH site. Lys-128 is a binding site for 1-deoxy-D-xylulose 5-phosphate. NADPH is bound at residue Glu-129. Asp-153 lines the Mn(2+) pocket. Residues Ser-154, Glu-155, Ser-184, and His-207 each contribute to the 1-deoxy-D-xylulose 5-phosphate site. Mn(2+) is bound at residue Glu-155. Gly-213 lines the NADPH pocket. Ser-220, Asn-225, Lys-226, and Glu-229 together coordinate 1-deoxy-D-xylulose 5-phosphate. Glu-229 serves as a coordination point for Mn(2+).

This sequence belongs to the DXR family. The cofactor is Mg(2+). Mn(2+) is required as a cofactor.

The enzyme catalyses 2-C-methyl-D-erythritol 4-phosphate + NADP(+) = 1-deoxy-D-xylulose 5-phosphate + NADPH + H(+). It functions in the pathway isoprenoid biosynthesis; isopentenyl diphosphate biosynthesis via DXP pathway; isopentenyl diphosphate from 1-deoxy-D-xylulose 5-phosphate: step 1/6. Catalyzes the NADPH-dependent rearrangement and reduction of 1-deoxy-D-xylulose-5-phosphate (DXP) to 2-C-methyl-D-erythritol 4-phosphate (MEP). This is 1-deoxy-D-xylulose 5-phosphate reductoisomerase from Stutzerimonas stutzeri (strain A1501) (Pseudomonas stutzeri).